Reading from the N-terminus, the 85-residue chain is UPF0181 protein YPTS_1774 (85 aa).

A compositionally biased stretch (basic and acidic residues) spans 57-72 (DHDFDEHTESDYRRDD). The interval 57–85 (DHDFDEHTESDYRRDDEPDADDIEDLYEG) is disordered. The span at 73-85 (EPDADDIEDLYEG) shows a compositional bias: acidic residues.

It belongs to the UPF0181 family.

In Yersinia pseudotuberculosis serotype IB (strain PB1/+), this protein is UPF0181 protein YPTS_1774.